The following is a 477-amino-acid chain: Probable cytosol aminopeptidase (477 aa).

The Mn(2+) site is built by K245 and D250. The active site involves K257. Mn(2+) contacts are provided by D268, D327, and E329. R331 is a catalytic residue.

This sequence belongs to the peptidase M17 family. It depends on Mn(2+) as a cofactor.

The protein localises to the cytoplasm. It carries out the reaction Release of an N-terminal amino acid, Xaa-|-Yaa-, in which Xaa is preferably Leu, but may be other amino acids including Pro although not Arg or Lys, and Yaa may be Pro. Amino acid amides and methyl esters are also readily hydrolyzed, but rates on arylamides are exceedingly low.. It catalyses the reaction Release of an N-terminal amino acid, preferentially leucine, but not glutamic or aspartic acids.. Functionally, presumably involved in the processing and regular turnover of intracellular proteins. Catalyzes the removal of unsubstituted N-terminal amino acids from various peptides. The chain is Probable cytosol aminopeptidase from Exiguobacterium sibiricum (strain DSM 17290 / CCUG 55495 / CIP 109462 / JCM 13490 / 255-15).